The chain runs to 524 residues: Leukotriene-B4 omega-hydroxylase 3 (524 aa).

Heme contacts are provided by Glu328 and Cys468.

This sequence belongs to the cytochrome P450 family. Heme is required as a cofactor.

The protein resides in the endoplasmic reticulum membrane. It localises to the microsome membrane. It catalyses the reaction leukotriene B4 + reduced [NADPH--hemoprotein reductase] + O2 = 20-hydroxy-leukotriene B4 + oxidized [NADPH--hemoprotein reductase] + H2O + H(+). Its pathway is lipid metabolism; leukotriene B4 degradation. In terms of biological role, cytochromes P450 are a group of heme-thiolate monooxygenases. Catalyzes the omega-hydroxylation of LTB4. The sequence is that of Leukotriene-B4 omega-hydroxylase 3 (Cyp4f14) from Mus musculus (Mouse).